The chain runs to 617 residues: 1-deoxy-D-xylulose-5-phosphate synthase (617 aa).

Residues His77 and 118-120 (GHS) each bind thiamine diphosphate. Asp149 is a Mg(2+) binding site. Thiamine diphosphate is bound by residues 150 to 151 (GA), Asn178, Tyr287, and Glu368. A Mg(2+)-binding site is contributed by Asn178.

It belongs to the transketolase family. DXPS subfamily. As to quaternary structure, homodimer. Mg(2+) is required as a cofactor. It depends on thiamine diphosphate as a cofactor.

The enzyme catalyses D-glyceraldehyde 3-phosphate + pyruvate + H(+) = 1-deoxy-D-xylulose 5-phosphate + CO2. It participates in metabolic intermediate biosynthesis; 1-deoxy-D-xylulose 5-phosphate biosynthesis; 1-deoxy-D-xylulose 5-phosphate from D-glyceraldehyde 3-phosphate and pyruvate: step 1/1. Its function is as follows. Catalyzes the acyloin condensation reaction between C atoms 2 and 3 of pyruvate and glyceraldehyde 3-phosphate to yield 1-deoxy-D-xylulose-5-phosphate (DXP). This chain is 1-deoxy-D-xylulose-5-phosphate synthase, found in Haemophilus ducreyi (strain 35000HP / ATCC 700724).